The primary structure comprises 568 residues: Phosphoprotein (568 aa).

Positions 1-24 (MDQDAFFFERDPEAEGEAPRKQES) are disordered. A compositionally biased stretch (basic and acidic residues) spans 7-24 (FFERDPEAEGEAPRKQES). Residues 33–41 (DVVLSYKPT) form an N0 binding region. The disordered stretch occupies residues 45–324 (EDRSWLHGII…ANEEETSNTS (280 aa)). Composition is skewed to basic and acidic residues over residues 56 to 105 (NPKE…HARI), 132 to 144 (RNTR…PNER), and 151 to 167 (LTDE…KREE). Polar residues predominate over residues 190–208 (RTNNNGRSMETSSTHSTRI). Over residues 239–253 (TRSERTQNSELHKST) the composition is skewed to basic and acidic residues. The segment covering 294-305 (YTMNNANNNTKS) has biased composition (polar residues). The segment at 344-411 (FELSRSASHV…SSRDLHKRFS (68 aa)) is multimerization. A coiled-coil region spans residues 387–416 (EENRTLLKQIQEEINSSRDLHKRFSEYQKE). Residues 412 to 445 (EYQKEQNSLMMANLSTLHIITDRGGKTGDPSDTT) form a l protein binding region. Residues 434–455 (RGGKTGDPSDTTRSPSVFTKGK) form a disordered region. Polar residues predominate over residues 441–450 (PSDTTRSPSV). Residues 479–568 (DLIREDELRD…FEEDIDSLTN (90 aa)) form an interaction with the nucleocapsid (N-RNA) region.

The protein belongs to the respirovirus P protein family. Homotetramer. Interacts (via multimerization domain) with polymerase L; this interaction forms the polymerase complex. Interacts (via N-terminus) with N0; this interaction allows P to chaperon N0 before encapsidation and form the N-P complex. Interacts (via C-terminus) with N-RNA template; this interaction positions the polymerase on the template.

In terms of biological role, essential cofactor of the RNA polymerase L that plays a central role in the transcription and replication by forming the polymerase complex with RNA polymerase L and recruiting L to the genomic N-RNA template for RNA synthesis. Also plays a central role in the encapsidation of nascent RNA chains by forming the encapsidation complex with the nucleocapsid protein N (N-P complex). Acts as a chaperone for newly synthesized free N protein, so-called N0, allowing encapsidation of nascent RNA chains during replication. The nucleoprotein protein N prevents excessive phosphorylation of P, which leads to down-regulation of viral transcription/ replication. Participates, together with N, in the formation of viral factories (viroplasms), which are large inclusions in the host cytoplasm where replication takes place. Recruits host PI4KB and remodel the host endoplasmic reticulum membrane to form viral replication factories. This chain is Phosphoprotein (P/C), found in Human parainfluenza 1 virus (strain C35) (HPIV-1).